Reading from the N-terminus, the 427-residue chain is Enolase (427 aa).

Glutamine 163 contacts (2R)-2-phosphoglycerate. The active-site Proton donor is glutamate 205. Positions 242, 283, and 310 each coordinate Mg(2+). (2R)-2-phosphoglycerate-binding residues include lysine 335, arginine 364, serine 365, and lysine 386. The active-site Proton acceptor is the lysine 335.

It belongs to the enolase family. The cofactor is Mg(2+).

It is found in the cytoplasm. Its subcellular location is the secreted. It localises to the cell surface. It carries out the reaction (2R)-2-phosphoglycerate = phosphoenolpyruvate + H2O. It functions in the pathway carbohydrate degradation; glycolysis; pyruvate from D-glyceraldehyde 3-phosphate: step 4/5. Its function is as follows. Catalyzes the reversible conversion of 2-phosphoglycerate (2-PG) into phosphoenolpyruvate (PEP). It is essential for the degradation of carbohydrates via glycolysis. The chain is Enolase from Salinispora tropica (strain ATCC BAA-916 / DSM 44818 / JCM 13857 / NBRC 105044 / CNB-440).